A 478-amino-acid chain; its full sequence is Cytochrome c-552 (478 aa).

Positions 1–26 (MTRIKINARRIFSLLIPFFFFTSVHA) are cleaved as a signal peptide. His-94 contacts heme c. Heme is bound by residues Cys-122, Cys-125, and Lys-126. 6 residues coordinate heme c: Cys-160, Cys-163, His-164, Cys-209, Cys-212, and His-213. Ca(2+)-binding residues include Glu-215, Tyr-216, Lys-261, and Gln-263. Tyr-216 provides a ligand contact to substrate. His-264 serves as a coordination point for substrate. Heme c is bound by residues His-275, Cys-282, Cys-285, His-286, His-301, Cys-314, Cys-317, His-318, and His-393.

Belongs to the cytochrome c-552 family. Ca(2+) serves as cofactor. Heme c is required as a cofactor.

The protein localises to the periplasm. The catalysed reaction is 6 Fe(III)-[cytochrome c] + NH4(+) + 2 H2O = 6 Fe(II)-[cytochrome c] + nitrite + 8 H(+). It participates in nitrogen metabolism; nitrate reduction (assimilation). In terms of biological role, catalyzes the reduction of nitrite to ammonia, consuming six electrons in the process. The chain is Cytochrome c-552 from Shigella flexneri.